The following is a 617-amino-acid chain: Erythritol-mannosyl-transferase 1 (617 aa).

Disordered regions lie at residues 365–396 (RNPG…IDSR) and 567–617 (RQRK…VTNP). The span at 371–381 (GFTSPLNSPTA) shows a compositional bias: polar residues. Residues 386–396 (KWDEKRPIDSR) show a composition bias toward basic and acidic residues. Polar residues predominate over residues 578-603 (TAKTSLSVDTTEVATPTFTDTETSLS).

Belongs to the UDP-glycosyltransferase family.

It functions in the pathway secondary metabolite biosynthesis. In terms of biological role, glycosyltransferase; part of the gene cluster that mediates the biosynthesis of mannosylerythritol lipids (MELs), surface-active substances that enhance the availability of water-insoluble substrates. Depending on the number of acetyl groups, mannosylerythritol lipids can be differentiated into MEL A (fully acetylated), MEL B and MEL C (monoacetylated at R-6 and R-4, respectively), and the fully deacetylated MEL D. The first step in the pathway is the generation of mannosylerythritol by the glycosyltransferase EMT1 which catalyzes the transfer of GDP-mannose to the C-4 atom of meso-erythritol. This reaction has to be stereospecific, since only mannosyl-D-erythritol is generated. The produced disaccharide is subsequently acylated with fatty acids of various lengths by the acyltransferases MAC1 and MAC2 at positions C-2 and C-3, repectively. The existence of MEL derivatives which carry an acetyl group at C-2 implies that at least MAC1 also accepts acetyl-CoA as a donor. The final step of MEL biosynthesis is the acetylation of the fully acylated mannosylerythritol lipids catalyzed by the acetyl-CoA-dependent acetyltransferase MAT1. MAT1 displays a relaxed regioselectivity and is able to transfer acetylgroups to both positions C-4 and C-6 of the mannosyl moiety. The protein is Erythritol-mannosyl-transferase 1 of Pseudozyma antarctica (strain T-34) (Yeast).